The sequence spans 181 residues: uncharacterized protein (181 aa).

Composition is skewed to gly residues over residues 143-156 (RRGG…GPRG) and 170-181 (GPFGPGYRGPRF). The segment at 143–181 (RRGGRYGDFGGPRGPRGPRNDGPFGPFGPFGPGYRGPRF) is disordered.

Has been detected in a cytochrome bc1-aa3 supercomplex; its deletion however leaves complex activity unaffected.

This is an uncharacterized protein from Corynebacterium glutamicum (strain ATCC 13032 / DSM 20300 / JCM 1318 / BCRC 11384 / CCUG 27702 / LMG 3730 / NBRC 12168 / NCIMB 10025 / NRRL B-2784 / 534).